A 230-amino-acid polypeptide reads, in one-letter code: Dickkopf-like protein 1 (230 aa).

Residues 1 to 20 (MCRLRVLLLLLPLAFVSSSA) form the signal peptide. Residues N31, N87, and N102 are each glycosylated (N-linked (GlcNAc...) asparagine).

Interacts with SLXL1; Co-localize in seminiferous tubules. Interacts with SLY. Post-translationally, N-glycosylated during spermatogenesis. Not N-glycosylated in mature sperm. In terms of tissue distribution, testis-specific. Abundant in the seminiferous tubules where it is associated with developing spermatocytes. Expressed only in testis (at protein level). Not detectable on postnatal days 4 and 9 but after day 18 it gradually increased as the development of testes progressed. Expressed at high levels in testis and at weak levels in epididymis.

Its subcellular location is the secreted. The protein resides in the cytoplasmic vesicle. It is found in the secretory vesicle. The protein localises to the acrosome. Functionally, involved in fertilization by facilitating sperm penetration of the zona pellucida. May promote spermatocyte apoptosis, thereby limiting sperm production. In adults, may reduce testosterone synthesis in Leydig cells. Is not essential either for development or fertility. The sequence is that of Dickkopf-like protein 1 from Mus musculus (Mouse).